The primary structure comprises 326 residues: Biotin synthase (326 aa).

Residues 40–264 (GQVQACTLVS…VLPRSYVRLA (225 aa)) form the Radical SAM core domain. [4Fe-4S] cluster-binding residues include cysteine 55, cysteine 59, and cysteine 62. Positions 99, 130, 190, and 262 each coordinate [2Fe-2S] cluster.

It belongs to the radical SAM superfamily. Biotin synthase family. In terms of assembly, homodimer. It depends on [4Fe-4S] cluster as a cofactor. [2Fe-2S] cluster serves as cofactor.

The catalysed reaction is (4R,5S)-dethiobiotin + (sulfur carrier)-SH + 2 reduced [2Fe-2S]-[ferredoxin] + 2 S-adenosyl-L-methionine = (sulfur carrier)-H + biotin + 2 5'-deoxyadenosine + 2 L-methionine + 2 oxidized [2Fe-2S]-[ferredoxin]. Its pathway is cofactor biosynthesis; biotin biosynthesis; biotin from 7,8-diaminononanoate: step 2/2. In terms of biological role, catalyzes the conversion of dethiobiotin (DTB) to biotin by the insertion of a sulfur atom into dethiobiotin via a radical-based mechanism. This is Biotin synthase from Halorhodospira halophila (strain DSM 244 / SL1) (Ectothiorhodospira halophila (strain DSM 244 / SL1)).